A 670-amino-acid polypeptide reads, in one-letter code: DNA-binding transcriptional activator HyfR (670 aa).

The GAF domain maps to 169–311 (DLDDLIADVA…HIADRIAIAV (143 aa)). Residues 207–221 (CSDLSASHCACLPRC) carry the Cys-rich segment, might bind a metal cluster motif. Residues 347–576 (IIYQSQAMED…LENVIERAVL (230 aa)) form the Sigma-54 factor interaction domain. ATP is bound by residues 375 to 382 (GETGTGKE) and 438 to 447 (ADGGTLFLDE). Residues 641–660 (PRGAATRLGMKRTTLLSRMQ) constitute a DNA-binding region (H-T-H motif).

In terms of biological role, a transcriptional activator of its own operon; when overexpressed operon expression is strongly enhanced by low pH (under pH 6.0), strongly inhibited by O(2) but only weakly stimulated by fumarate. Expression in situ is very weak. This chain is DNA-binding transcriptional activator HyfR, found in Escherichia coli (strain K12).